The sequence spans 67 residues: uncharacterized protein (67 aa).

This sequence to E.coli YbdD.

This is an uncharacterized protein from Escherichia coli O157:H7.